The sequence spans 677 residues: uncharacterized protein (677 aa).

Residues 1–87 form a disordered region; the sequence is MGRHSKPDPE…PTGAEPIAAA (87 aa). Residues 17–29 show a composition bias toward basic and acidic residues; that stretch reads SDGHAAEQQHWED. The segment covering 51–64 has biased composition (low complexity); the sequence is GHYSAVGGYSASGS. 4 consecutive transmembrane segments (helical) span residues 115–135, 192–212, 313–333, and 474–494; these read VSIG…GVIL, VAVA…IGKW, EAVA…IGAV, and ATLA…IMLD.

The protein localises to the cell membrane. This is an uncharacterized protein from Mycobacterium tuberculosis (strain CDC 1551 / Oshkosh).